A 146-amino-acid chain; its full sequence is Anti-sigma F factor (146 aa).

This sequence belongs to the anti-sigma-factor family.

The enzyme catalyses L-seryl-[protein] + ATP = O-phospho-L-seryl-[protein] + ADP + H(+). It catalyses the reaction L-threonyl-[protein] + ATP = O-phospho-L-threonyl-[protein] + ADP + H(+). Functionally, binds to sigma F and blocks its ability to form an RNA polymerase holoenzyme (E-sigma F). Phosphorylates SpoIIAA on a serine residue. This phosphorylation may enable SpoIIAA to act as an anti-anti-sigma factor that counteracts SpoIIAB and thus releases sigma F from inhibition. In Geobacillus thermodenitrificans (strain NG80-2), this protein is Anti-sigma F factor.